Here is a 146-residue protein sequence, read N- to C-terminus: Hemoglobin subunit beta (146 aa).

In terms of domain architecture, Globin spans 2–146 (HWTAEEKSAI…VAHALAHQYH (145 aa)). Heme b is bound by residues H63 and H92.

It belongs to the globin family. As to quaternary structure, heterotetramer of two alpha chains and two beta chains. Oxygenation results in dissociation to dimers. Red blood cells.

In terms of biological role, involved in oxygen transport from the lung to the various peripheral tissues. This is Hemoglobin subunit beta (HBB) from Erythrolamprus miliaris (South American water snake).